We begin with the raw amino-acid sequence, 50 residues long: Bacteriocin BacSp222 (50 aa).

Methionine 1 is modified (N-formylmethionine).

It localises to the secreted. In terms of biological role, has bacteriolytic activity against Gram-positive bacteria B.subtilis, L.lactis and M.luteus and several species from genus Staphylococcus including methicillin-resistant S.aureus, with MIC values ranging from 0.11 uM to 7.8 uM. Has no activity against Gram-negative bacteria or fungi. In vitro, has a dose-dependent cytolytic effect on eukaryotic cells. This chain is Bacteriocin BacSp222, found in Staphylococcus pseudintermedius.